The primary structure comprises 92 residues: Small ribosomal subunit protein uS19c (92 aa).

This sequence belongs to the universal ribosomal protein uS19 family.

Its subcellular location is the plastid. It localises to the chloroplast. Functionally, protein S19 forms a complex with S13 that binds strongly to the 16S ribosomal RNA. This chain is Small ribosomal subunit protein uS19c, found in Populus alba (White poplar).